Here is a 467-residue protein sequence, read N- to C-terminus: 3-isopropylmalate dehydratase large subunit (467 aa).

[4Fe-4S] cluster contacts are provided by Cys347, Cys407, and Cys410.

This sequence belongs to the aconitase/IPM isomerase family. LeuC type 1 subfamily. In terms of assembly, heterodimer of LeuC and LeuD. The cofactor is [4Fe-4S] cluster.

The catalysed reaction is (2R,3S)-3-isopropylmalate = (2S)-2-isopropylmalate. The protein operates within amino-acid biosynthesis; L-leucine biosynthesis; L-leucine from 3-methyl-2-oxobutanoate: step 2/4. In terms of biological role, catalyzes the isomerization between 2-isopropylmalate and 3-isopropylmalate, via the formation of 2-isopropylmaleate. This chain is 3-isopropylmalate dehydratase large subunit, found in Crocosphaera subtropica (strain ATCC 51142 / BH68) (Cyanothece sp. (strain ATCC 51142)).